Consider the following 249-residue polypeptide: Sodium channel modifier 1 (249 aa).

A Bipartite nuclear localization signal motif is present at residues 4–20; it reads KREGDDQSQLNILKKRR. A Matrin-type zinc finger spans residues 42-74; that stretch reads YSCLVCSHRPVFDTVDMLVVHRKGKRHLEGMKW. The segment covering 94 to 103 has biased composition (basic and acidic residues); sequence YVKAEDDRQE. 3 disordered regions span residues 94–116, 128–199, and 228–249; these read YVKA…QTRK, YSSC…PLTE, and ENVE…SESS. Over residues 104–115 the composition is skewed to polar residues; the sequence is PSSSAPLLTQTR. Over residues 134-149 the composition is skewed to basic and acidic residues; the sequence is KASERSESSSKEHRND. Polar residues predominate over residues 150–170; that stretch reads LANSHLSMRTESNDSRTTVHQ. A compositionally biased stretch (acidic residues) spans 230–239; sequence VEFDSDEEEP.

As to quaternary structure, component of the minor spliceosome, which splices U12-type introns.

It is found in the nucleus. It localises to the nucleoplasm. The protein resides in the nucleus speckle. Its function is as follows. As a component of the minor spliceosome, involved in the splicing of U12-type introns in pre-mRNAs. This chain is Sodium channel modifier 1 (scnm1), found in Danio rerio (Zebrafish).